The chain runs to 148 residues: Large ribosomal subunit protein bL9 (148 aa).

Belongs to the bacterial ribosomal protein bL9 family.

Functionally, binds to the 23S rRNA. This Streptomyces avermitilis (strain ATCC 31267 / DSM 46492 / JCM 5070 / NBRC 14893 / NCIMB 12804 / NRRL 8165 / MA-4680) protein is Large ribosomal subunit protein bL9.